The following is a 235-amino-acid chain: Large ribosomal subunit protein uL1 (235 aa).

This sequence belongs to the universal ribosomal protein uL1 family. Part of the 50S ribosomal subunit.

In terms of biological role, binds directly to 23S rRNA. The L1 stalk is quite mobile in the ribosome, and is involved in E site tRNA release. Protein L1 is also a translational repressor protein, it controls the translation of the L11 operon by binding to its mRNA. This is Large ribosomal subunit protein uL1 from Corynebacterium diphtheriae (strain ATCC 700971 / NCTC 13129 / Biotype gravis).